We begin with the raw amino-acid sequence, 406 residues long: Argininosuccinate synthase (406 aa).

ATP is bound by residues 11-19 (AYSGGLDTS) and alanine 38. 2 residues coordinate L-citrulline: tyrosine 91 and serine 96. Position 121 (glycine 121) interacts with ATP. The L-aspartate site is built by threonine 123, asparagine 127, and aspartate 128. Asparagine 127 serves as a coordination point for L-citrulline. Residues arginine 131, serine 181, serine 190, glutamate 266, and tyrosine 278 each contribute to the L-citrulline site.

This sequence belongs to the argininosuccinate synthase family. Type 1 subfamily. Homotetramer.

It localises to the cytoplasm. The catalysed reaction is L-citrulline + L-aspartate + ATP = 2-(N(omega)-L-arginino)succinate + AMP + diphosphate + H(+). The protein operates within amino-acid biosynthesis; L-arginine biosynthesis; L-arginine from L-ornithine and carbamoyl phosphate: step 2/3. This Campylobacter lari (strain RM2100 / D67 / ATCC BAA-1060) protein is Argininosuccinate synthase.